The chain runs to 199 residues: Single-stranded DNA-binding protein 2 (199 aa).

Residues 1-110 (MAGETVITVV…LDVDEVGASL (110 aa)) enclose the SSB domain. Residues 114 to 199 (TAKVTKTSGQ…GGGYSDEPPF (86 aa)) form a disordered region. Over residues 123–156 (QGRGGQGGYGGGGGGQGGGGWGGGPGGGQQGGGA) the composition is skewed to gly residues. Low complexity predominate over residues 157-166 (PADDPWATGG). Residues 167-193 (APAGGQQGGGGQGGGGWGGGSGGGGGY) show a composition bias toward gly residues.

In terms of assembly, homotetramer. Post-translationally, phosphorylated on tyrosine residue(s) when expressed in E.coli.

The protein localises to the cytoplasm. The protein resides in the nucleoid. This Streptomyces coelicolor (strain ATCC BAA-471 / A3(2) / M145) protein is Single-stranded DNA-binding protein 2 (ssb2).